Reading from the N-terminus, the 349-residue chain is Aspartate carbamoyltransferase catalytic subunit (349 aa).

Carbamoyl phosphate contacts are provided by Arg59 and Thr60. Residue Lys87 participates in L-aspartate binding. The carbamoyl phosphate site is built by Arg109, His142, and Gln145. 2 residues coordinate L-aspartate: Arg182 and Arg253. Residues Gly294 and Pro295 each coordinate carbamoyl phosphate.

The protein belongs to the aspartate/ornithine carbamoyltransferase superfamily. ATCase family. In terms of assembly, heterododecamer (2C3:3R2) of six catalytic PyrB chains organized as two trimers (C3), and six regulatory PyrI chains organized as three dimers (R2).

The enzyme catalyses carbamoyl phosphate + L-aspartate = N-carbamoyl-L-aspartate + phosphate + H(+). The protein operates within pyrimidine metabolism; UMP biosynthesis via de novo pathway; (S)-dihydroorotate from bicarbonate: step 2/3. Catalyzes the condensation of carbamoyl phosphate and aspartate to form carbamoyl aspartate and inorganic phosphate, the committed step in the de novo pyrimidine nucleotide biosynthesis pathway. The chain is Aspartate carbamoyltransferase catalytic subunit from Synechococcus sp. (strain CC9902).